The sequence spans 683 residues: Zinc finger protein 418 (683 aa).

Positions 48–123 (VTIEDVTVYF…TPKQGQLRQK (76 aa)) constitute a KRAB domain. Residues 102–120 (QSLSQTEAPQVRTPKQGQL) show a composition bias toward polar residues. Disordered stretches follow at residues 102–124 (QSLSQTEAPQVRTPKQGQLRQKP) and 209–247 (DIPNGEKQNKIKRGKAFHRDKNNSESDEYKKSSSPQHRL). Residues 225–239 (FHRDKNNSESDEYKK) show a composition bias toward basic and acidic residues. C2H2-type zinc fingers lie at residues 287–309 (YECHVCGKWFGQKATLRIHQRRH), 315–337 (YKCGECGKSFCQSSNLSEHCRVH), 343–365 (FECLECGKAFGCHSSLLRHQRTH), 371–393 (YECSDCGRLFRQIVSLITHQRTH), 399–421 (YECGQCEKSFSHKATLTVHQRVH), 427–449 (YHCEACGKSFSQSANLIKHSKIH), 455–477 (YECGECGLCFRQRATLMKHQRTH), 483–505 (YECRECGKFFKQYFYLIEHRRIH), 511–533 (YECEQCGKSYTQKATLIRHQRVH), 539–561 (YKCEECGKAFEYKSRLKRHQRTH), 567–589 (YECAKCGKFFRESYNLAEHQKIH), 595–617 (YHCDQCGKCFSRRADLVKHQRVH), 623–645 (YTCGECGKTFSRTTNLVQHRRIH), and 651–673 (YECDQCGKSFSQVSTLTRHQLLH).

It belongs to the krueppel C2H2-type zinc-finger protein family.

It localises to the nucleus. Its function is as follows. Transcriptional repressor. May play a role as regulator of the ubiquitin-proteasome system and autophagy-lysosomal pathway. The sequence is that of Zinc finger protein 418 from Rattus norvegicus (Rat).